The following is a 303-amino-acid chain: MSQIDKMAKIKKLREISDAPFVDCKKALENSDYDIDLAINWLNKNGKSKALKKSDRIAAEGLVLAKKDANSVLVFELNSETDFVAKNQNFINLQQKIGELLLASDFANLDDALLIQDEAGRSISELLILATATIGEKITLRRVFKTKYSLEQSVEVYTHSNGQIAVITILKGGNLEIAKNISMHVAALNPQYILKVEVPNEKLQEIQLEVEKKAFAEVKNFEKKPENVRVGILKGMIDKQLSEFVLELQPLATDSAVTVEKYLAQNSATLEKVVRFEVGEGIQKQNVDFSAEVNQQIQEFQKK.

An involved in Mg(2+) ion dislocation from EF-Tu region spans residues 81–84 (TDFV).

The protein belongs to the EF-Ts family.

It is found in the cytoplasm. Functionally, associates with the EF-Tu.GDP complex and induces the exchange of GDP to GTP. It remains bound to the aminoacyl-tRNA.EF-Tu.GTP complex up to the GTP hydrolysis stage on the ribosome. This is Elongation factor Ts from Mesomycoplasma hyopneumoniae (strain 7448) (Mycoplasma hyopneumoniae).